Reading from the N-terminus, the 513-residue chain is Light-independent protochlorophyllide reductase subunit B (513 aa).

Aspartate 36 is a binding site for [4Fe-4S] cluster. The Proton donor role is filled by aspartate 299. Substrate is bound at residue 434–435 (GM).

It belongs to the ChlB/BchB/BchZ family. In terms of assembly, protochlorophyllide reductase is composed of three subunits; ChlL, ChlN and ChlB. Forms a heterotetramer of two ChlB and two ChlN subunits. [4Fe-4S] cluster serves as cofactor.

The protein localises to the plastid. Its subcellular location is the chloroplast. It catalyses the reaction chlorophyllide a + oxidized 2[4Fe-4S]-[ferredoxin] + 2 ADP + 2 phosphate = protochlorophyllide a + reduced 2[4Fe-4S]-[ferredoxin] + 2 ATP + 2 H2O. Its pathway is porphyrin-containing compound metabolism; chlorophyll biosynthesis (light-independent). Its function is as follows. Component of the dark-operative protochlorophyllide reductase (DPOR) that uses Mg-ATP and reduced ferredoxin to reduce ring D of protochlorophyllide (Pchlide) to form chlorophyllide a (Chlide). This reaction is light-independent. The NB-protein (ChlN-ChlB) is the catalytic component of the complex. The protein is Light-independent protochlorophyllide reductase subunit B of Zygnema circumcarinatum (Green alga).